A 455-amino-acid polypeptide reads, in one-letter code: Phosphoglucosamine mutase (455 aa).

Residue Ser-103 is the Phosphoserine intermediate of the active site. Mg(2+) contacts are provided by Ser-103, Asp-243, Asp-245, and Asp-247. Ser-103 bears the Phosphoserine mark.

Belongs to the phosphohexose mutase family. The cofactor is Mg(2+). In terms of processing, activated by phosphorylation.

The enzyme catalyses alpha-D-glucosamine 1-phosphate = D-glucosamine 6-phosphate. Functionally, catalyzes the conversion of glucosamine-6-phosphate to glucosamine-1-phosphate. This is Phosphoglucosamine mutase from Halorhodospira halophila (strain DSM 244 / SL1) (Ectothiorhodospira halophila (strain DSM 244 / SL1)).